The chain runs to 78 residues: Small ribosomal subunit protein bS20 (78 aa).

This sequence belongs to the bacterial ribosomal protein bS20 family.

Binds directly to 16S ribosomal RNA. The chain is Small ribosomal subunit protein bS20 from Streptococcus pneumoniae serotype 19F (strain G54).